The following is a 128-amino-acid chain: Small ribosomal subunit protein uS9 (128 aa).

In terms of assembly, part of the 30S ribosomal subunit. Contacts proteins S7 and S10.

In terms of biological role, part of the top of the head of the 30S subunit. The C-terminal region penetrates the head emerging in the P-site where it contacts tRNA. The chain is Small ribosomal subunit protein uS9 (rpsI) from Thermus thermophilus (strain ATCC 27634 / DSM 579 / HB8).